The primary structure comprises 280 residues: Cell division control protein 2 homolog B (280 aa).

Residues 1–5 (AYGVV) and K20 contribute to the ATP site. The Protein kinase domain maps to 1–274 (AYGVVYKARD…AKKALEHEYF (274 aa)). Position 2 is a phosphotyrosine (Y2). The Proton acceptor role is filled by D114. The residue at position 148 (T148) is a Phosphothreonine; by CAK.

Belongs to the protein kinase superfamily. CMGC Ser/Thr protein kinase family. CDC2/CDKX subfamily.

It carries out the reaction L-seryl-[protein] + ATP = O-phospho-L-seryl-[protein] + ADP + H(+). The enzyme catalyses L-threonyl-[protein] + ATP = O-phospho-L-threonyl-[protein] + ADP + H(+). The catalysed reaction is [DNA-directed RNA polymerase] + ATP = phospho-[DNA-directed RNA polymerase] + ADP + H(+). Phosphorylation at Tyr-2 inactivates the enzyme, while phosphorylation at Thr-148 activates it. Its function is as follows. Plays a key role in the control of the eukaryotic cell cycle. This Antirrhinum majus (Garden snapdragon) protein is Cell division control protein 2 homolog B (CDC2B).